The sequence spans 529 residues: GTPase Obg (529 aa).

The Obg domain maps to 2–159; sequence ASFVDRVVLH…SDIVLELKSI (158 aa). One can recognise an OBG-type G domain in the interval 160-343; sequence ADIALVGFPS…LGFAMAEIVK (184 aa). GTP-binding positions include 166 to 173, 191 to 195, 212 to 215, 295 to 298, and 324 to 326; these read GFPSAGKS, FTTLI, DVPG, NKVD, and SAT. Mg(2+)-binding residues include serine 173 and threonine 193. The region spanning 363–447 is the OCT domain; that stretch reads PRAVNETGFR…DDGVVFDWEP (85 aa). Residues 461-529 are disordered; that stretch reads GTDIRFADTG…ESGLDSGDES (69 aa). A compositionally biased stretch (basic and acidic residues) spans 462-502; that stretch reads TDIRFADTGDRPTRSQKREEQQERRDAKAAARAELEAERKA.

Belongs to the TRAFAC class OBG-HflX-like GTPase superfamily. OBG GTPase family. As to quaternary structure, monomer. The cofactor is Mg(2+).

The protein resides in the cytoplasm. Its function is as follows. An essential GTPase which binds GTP, GDP and possibly (p)ppGpp with moderate affinity, with high nucleotide exchange rates and a fairly low GTP hydrolysis rate. Plays a role in control of the cell cycle, stress response, ribosome biogenesis and in those bacteria that undergo differentiation, in morphogenesis control. The chain is GTPase Obg from Pseudarthrobacter chlorophenolicus (strain ATCC 700700 / DSM 12829 / CIP 107037 / JCM 12360 / KCTC 9906 / NCIMB 13794 / A6) (Arthrobacter chlorophenolicus).